The primary structure comprises 94 residues: Integration host factor subunit beta (94 aa).

Belongs to the bacterial histone-like protein family. Heterodimer of an alpha and a beta chain.

In terms of biological role, this protein is one of the two subunits of integration host factor, a specific DNA-binding protein that functions in genetic recombination as well as in transcriptional and translational control. The polypeptide is Integration host factor subunit beta (Citrobacter koseri (strain ATCC BAA-895 / CDC 4225-83 / SGSC4696)).